A 401-amino-acid chain; its full sequence is Enolase (401 aa).

Gln154 is a (2R)-2-phosphoglycerate binding site. Glu196 functions as the Proton donor in the catalytic mechanism. The Mg(2+) site is built by Asp232, Glu275, and Asp302. Lys327, Arg356, Ser357, and Lys378 together coordinate (2R)-2-phosphoglycerate. Lys327 (proton acceptor) is an active-site residue.

It belongs to the enolase family. The cofactor is Mg(2+).

The protein resides in the cytoplasm. Its subcellular location is the secreted. It localises to the cell surface. The enzyme catalyses (2R)-2-phosphoglycerate = phosphoenolpyruvate + H2O. Its pathway is carbohydrate degradation; glycolysis; pyruvate from D-glyceraldehyde 3-phosphate: step 4/5. Functionally, catalyzes the reversible conversion of 2-phosphoglycerate (2-PG) into phosphoenolpyruvate (PEP). It is essential for the degradation of carbohydrates via glycolysis. In Haloquadratum walsbyi (strain DSM 16790 / HBSQ001), this protein is Enolase.